We begin with the raw amino-acid sequence, 65 residues long: Large ribosomal subunit protein bL35 (65 aa).

The interval 1–51 is disordered; it reads MPKIKTNRGAAKRFRKSASGRVKRGNAFTSHILTHKTRKNKRNLRGTSMVS. Composition is skewed to basic residues over residues 10–24 and 33–44; these read AAKR…RVKR and LTHKTRKNKRNL.

It belongs to the bacterial ribosomal protein bL35 family.

In Pelobacter propionicus (strain DSM 2379 / NBRC 103807 / OttBd1), this protein is Large ribosomal subunit protein bL35.